Here is a 143-residue protein sequence, read N- to C-terminus: Large ribosomal subunit protein uL11 (143 aa).

It belongs to the universal ribosomal protein uL11 family. In terms of assembly, part of the ribosomal stalk of the 50S ribosomal subunit. Interacts with L10 and the large rRNA to form the base of the stalk. L10 forms an elongated spine to which L12 dimers bind in a sequential fashion forming a multimeric L10(L12)X complex. One or more lysine residues are methylated.

Functionally, forms part of the ribosomal stalk which helps the ribosome interact with GTP-bound translation factors. This is Large ribosomal subunit protein uL11 from Bifidobacterium adolescentis (strain ATCC 15703 / DSM 20083 / NCTC 11814 / E194a).